Reading from the N-terminus, the 273-residue chain is Zinc finger protein 80 (273 aa).

C2H2-type zinc fingers lie at residues 49–71 (YKCK…QQIH), 77–99 (YECQ…VRIH), 103–127 (KPCK…HQIH), 133–155 (YECS…RMTH), 161–183 (FGCK…MKIH), 189–211 (YKCS…SMTH), and 217–239 (YECK…TRSH).

The protein belongs to the krueppel C2H2-type zinc-finger protein family.

The protein resides in the nucleus. May be involved in transcriptional regulation. This is Zinc finger protein 80 (ZNF80) from Pongo pygmaeus (Bornean orangutan).